A 242-amino-acid chain; its full sequence is tRNA pseudouridine synthase A (242 aa).

Catalysis depends on Asp51, which acts as the Nucleophile. Tyr107 is a substrate binding site.

It belongs to the tRNA pseudouridine synthase TruA family. As to quaternary structure, homodimer.

The enzyme catalyses uridine(38/39/40) in tRNA = pseudouridine(38/39/40) in tRNA. Formation of pseudouridine at positions 38, 39 and 40 in the anticodon stem and loop of transfer RNAs. This Helicobacter pylori (strain G27) protein is tRNA pseudouridine synthase A.